Here is a 104-residue protein sequence, read N- to C-terminus: L-rhamnose mutarotase (104 aa).

Residue Tyr18 participates in substrate binding. His22 functions as the Proton donor in the catalytic mechanism. Substrate contacts are provided by residues Tyr41 and 76–77 (WW).

The protein belongs to the rhamnose mutarotase family. In terms of assembly, homodimer.

Its subcellular location is the cytoplasm. The enzyme catalyses alpha-L-rhamnose = beta-L-rhamnose. It participates in carbohydrate metabolism; L-rhamnose metabolism. In terms of biological role, involved in the anomeric conversion of L-rhamnose. The sequence is that of L-rhamnose mutarotase from Yersinia pseudotuberculosis serotype O:1b (strain IP 31758).